The primary structure comprises 444 residues: Inward rectifier potassium channel 4 (444 aa).

At 1–55 the chain is on the cytoplasmic side; that stretch reads MHGHNRNGQAHVPRRKRRNRFVKKNGQCNVYFANLSNKSQRYMADIFTTCVDTRW. A helical membrane pass occupies residues 56–80; sequence RYMLMLFSAAFLVSWLFFGLLFWCI. Residues 81–119 lie on the Extracellular side of the membrane; it reads AFFHGDLEASPSVPAAGAPGGNGGAAPAAPKPCIMHVNG. The helical; Pore-forming intramembrane region spans 120–131; the sequence is FLGAFLFSVETQ. The segment at residues 132-138 is an intramembrane region (pore-forming); sequence TTIGYGF. Positions 133 to 138 match the Selectivity filter motif; the sequence is TIGYGF. Residues 139–147 are Extracellular-facing; it reads RCVTEECPL. The chain crosses the membrane as a helical span at residues 148 to 169; sequence AVIAVVVQSIVGCVIDSFMIGT. Topologically, residues 170–444 are cytoplasmic; the sequence is IMAKMARPKK…NISYRRESAI (275 aa). Positions 442–444 match the PDZ-binding motif; that stretch reads SAI.

Belongs to the inward rectifier-type potassium channel (TC 1.A.2.1) family. KCNJ4 subfamily. Homomultimeric and heteromultimeric association with KCNJ2 and KCNJ12. Interacts with DLG2 and DLG4. Associates, via its PDZ-recognition domain, with a complex containing LIN7A, LIN7B, LIN7C, DLG1, CASK and APBA1. Interacts with TAX1BP3. TAX1BP3 competes with LIN7 family members for KCNJ4 binding.

It is found in the cell membrane. Its subcellular location is the postsynaptic cell membrane. The protein resides in the cytoplasmic vesicle membrane. It catalyses the reaction K(+)(in) = K(+)(out). Functionally, inward rectifier potassium channels are characterized by a greater tendency to allow potassium to flow into the cell rather than out of it. Their voltage dependence is regulated by the concentration of extracellular potassium; as external potassium is raised, the voltage range of the channel opening shifts to more positive voltages. The inward rectification is mainly due to the blockage of outward current by internal magnesium. Can be blocked by extracellular barium and cesium. This is Inward rectifier potassium channel 4 (KCNJ4) from Mesocricetus auratus (Golden hamster).